The sequence spans 145 residues: Ribosome maturation factor RimP (145 aa).

The protein belongs to the RimP family.

The protein resides in the cytoplasm. Functionally, required for maturation of 30S ribosomal subunits. This Azotobacter vinelandii (strain DJ / ATCC BAA-1303) protein is Ribosome maturation factor RimP.